The sequence spans 211 residues: Ribosomal RNA small subunit methyltransferase G (211 aa).

Residues G73, 126–127, and R142 contribute to the S-adenosyl-L-methionine site; that span reads IE.

Belongs to the methyltransferase superfamily. RNA methyltransferase RsmG family.

It localises to the cytoplasm. The enzyme catalyses guanosine(527) in 16S rRNA + S-adenosyl-L-methionine = N(7)-methylguanosine(527) in 16S rRNA + S-adenosyl-L-homocysteine. Its function is as follows. Specifically methylates the N7 position of guanine in position 527 of 16S rRNA. This Methylorubrum extorquens (strain CM4 / NCIMB 13688) (Methylobacterium extorquens) protein is Ribosomal RNA small subunit methyltransferase G.